We begin with the raw amino-acid sequence, 270 residues long: Elongation factor Ts (270 aa).

The tract at residues 81-84 (TDFV) is involved in Mg(2+) ion dislocation from EF-Tu.

It belongs to the EF-Ts family.

It is found in the cytoplasm. Its function is as follows. Associates with the EF-Tu.GDP complex and induces the exchange of GDP to GTP. It remains bound to the aminoacyl-tRNA.EF-Tu.GTP complex up to the GTP hydrolysis stage on the ribosome. This is Elongation factor Ts from Wigglesworthia glossinidia brevipalpis.